The primary structure comprises 170 residues: Adenine phosphoribosyltransferase (170 aa).

Belongs to the purine/pyrimidine phosphoribosyltransferase family. As to quaternary structure, homodimer.

The protein localises to the cytoplasm. It carries out the reaction AMP + diphosphate = 5-phospho-alpha-D-ribose 1-diphosphate + adenine. Its pathway is purine metabolism; AMP biosynthesis via salvage pathway; AMP from adenine: step 1/1. Its function is as follows. Catalyzes a salvage reaction resulting in the formation of AMP, that is energically less costly than de novo synthesis. This is Adenine phosphoribosyltransferase from Cyanothece sp. (strain PCC 7425 / ATCC 29141).